A 277-amino-acid polypeptide reads, in one-letter code: Large ribosomal subunit protein uL2 (277 aa).

Residues 219-277 (TVRGSVMNPNDHPHGGGEGRSPIGHPSPRTPWGKPALGYKTRKNKKYSDRFIVKRRHDK) form a disordered region.

It belongs to the universal ribosomal protein uL2 family. In terms of assembly, part of the 50S ribosomal subunit. Forms a bridge to the 30S subunit in the 70S ribosome.

In terms of biological role, one of the primary rRNA binding proteins. Required for association of the 30S and 50S subunits to form the 70S ribosome, for tRNA binding and peptide bond formation. It has been suggested to have peptidyltransferase activity; this is somewhat controversial. Makes several contacts with the 16S rRNA in the 70S ribosome. This Clostridium botulinum (strain 657 / Type Ba4) protein is Large ribosomal subunit protein uL2.